The following is a 447-amino-acid chain: BAG family molecular chaperone regulator 5 (447 aa).

BAG domains lie at 9–86, 95–167, 182–260, 275–350, and 365–442; these read SISR…EQNA, QNIF…EDCM, SVAK…DLEE, SILK…DLKE, and SHKA…DLKS.

As to quaternary structure, binds to the ATPase domain of HSP/HSP70 chaperones. Binds PRKN. Interacts with HSPA8 and JPH2. As to expression, expressed in the heart.

Its function is as follows. Co-chaperone for HSP/HSP70 proteins. It functions as a nucleotide-exchange factor promoting the release of ADP from HSP70, thereby activating HSP70-mediated protein refolding. Has an essential role in maintaining proteostasis at junctional membrane complexes (JMC), where it may function as a scaffold between the HSPA8 chaperone and JMC proteins enabling correct, HSPA8-dependent JMC protein folding. Inhibits both auto-ubiquitination of PRKN and ubiquitination of target proteins by PRKN. This chain is BAG family molecular chaperone regulator 5 (BAG5), found in Homo sapiens (Human).